The chain runs to 601 residues: Glutathione-regulated potassium-efflux system protein KefB (601 aa).

The next 13 membrane-spanning stretches (helical) occupy residues Asp-5 to Ala-25, Ile-29 to Phe-49, Glu-55 to Leu-75, Ile-87 to Met-107, Ala-115 to Met-135, Val-152 to Gly-172, His-177 to Gly-197, Phe-207 to Gly-227, Leu-230 to Leu-250, Ile-261 to Ala-281, Leu-284 to Val-304, Phe-326 to Ser-346, and Ala-356 to Ile-376. In terms of domain architecture, RCK N-terminal spans Lys-400–Glu-518.

This sequence belongs to the monovalent cation:proton antiporter 2 (CPA2) transporter (TC 2.A.37) family. KefB subfamily. Interacts with the regulatory subunit KefG.

Its subcellular location is the cell inner membrane. In terms of biological role, pore-forming subunit of a potassium efflux system that confers protection against electrophiles. Catalyzes K(+)/H(+) antiport. This chain is Glutathione-regulated potassium-efflux system protein KefB, found in Enterobacter sp. (strain 638).